The primary structure comprises 296 residues: Nucleotide-binding protein SPT_1506 (296 aa).

13 to 20 (GMSGAGKT) lines the ATP pocket. 63 to 66 (DMRS) is a binding site for GTP.

Belongs to the RapZ-like family.

Functionally, displays ATPase and GTPase activities. This Streptococcus pneumoniae (strain Taiwan19F-14) protein is Nucleotide-binding protein SPT_1506.